The sequence spans 490 residues: Betaine aldehyde dehydrogenase (490 aa).

K(+)-binding residues include threonine 26, isoleucine 27, and aspartate 93. Position 150 to 152 (150 to 152 (GAW)) interacts with NAD(+). Lysine 162 functions as the Charge relay system in the catalytic mechanism. Position 176-179 (176-179 (KPSE)) interacts with NAD(+). Valine 180 is a K(+) binding site. An NAD(+)-binding site is contributed by 230–233 (GVAS). Leucine 246 is a binding site for K(+). The Proton acceptor role is filled by glutamate 252. Positions 254, 286, and 387 each coordinate NAD(+). Cysteine 286 acts as the Nucleophile in catalysis. Cysteine 286 carries the post-translational modification Cysteine sulfenic acid (-SOH). K(+)-binding residues include lysine 457 and glycine 460. The Charge relay system role is filled by glutamate 464.

It belongs to the aldehyde dehydrogenase family. As to quaternary structure, dimer of dimers. K(+) is required as a cofactor.

It catalyses the reaction betaine aldehyde + NAD(+) + H2O = glycine betaine + NADH + 2 H(+). It functions in the pathway amine and polyamine biosynthesis; betaine biosynthesis via choline pathway; betaine from betaine aldehyde: step 1/1. Its function is as follows. Involved in the biosynthesis of the osmoprotectant glycine betaine. Catalyzes the irreversible oxidation of betaine aldehyde to the corresponding acid. The chain is Betaine aldehyde dehydrogenase from Escherichia coli (strain SMS-3-5 / SECEC).